A 628-amino-acid polypeptide reads, in one-letter code: tRNA uridine 5-carboxymethylaminomethyl modification enzyme MnmG (628 aa).

Gly-13–Gly-18 provides a ligand contact to FAD. Gly-273–Phe-287 contacts NAD(+).

Belongs to the MnmG family. In terms of assembly, homodimer. Heterotetramer of two MnmE and two MnmG subunits. FAD is required as a cofactor.

The protein resides in the cytoplasm. NAD-binding protein involved in the addition of a carboxymethylaminomethyl (cmnm) group at the wobble position (U34) of certain tRNAs, forming tRNA-cmnm(5)s(2)U34. In Buchnera aphidicola subsp. Acyrthosiphon pisum (strain 5A), this protein is tRNA uridine 5-carboxymethylaminomethyl modification enzyme MnmG.